The sequence spans 333 residues: tRNA (guanine(37)-N(1))/4-demethylwyosine(37)-methyltransferase Taw22 (333 aa).

Residues Arg174, Phe191, Glu213 to Ile214, and Asp243 to Val244 each bind S-adenosyl-L-methionine.

Belongs to the class I-like SAM-binding methyltransferase superfamily. TRM5/TYW2 family.

The protein resides in the cytoplasm. The enzyme catalyses guanosine(37) in tRNA + S-adenosyl-L-methionine = N(1)-methylguanosine(37) in tRNA + S-adenosyl-L-homocysteine + H(+). It catalyses the reaction 4-demethylwyosine(37) in tRNA(Phe) + S-adenosyl-L-methionine = isowyosine(37) in tRNA(Phe) + S-adenosyl-L-homocysteine + H(+). Functionally, catalyzes both the N1-methylation of guanosine and the C7-methylation of 4-demethylwyosine (imG-14) at position 37 in tRNA(Phe). The polypeptide is tRNA (guanine(37)-N(1))/4-demethylwyosine(37)-methyltransferase Taw22 (Pyrococcus abyssi (strain GE5 / Orsay)).